Here is a 317-residue protein sequence, read N- to C-terminus: Transaldolase (317 aa).

Lysine 132 acts as the Schiff-base intermediate with substrate in catalysis.

It belongs to the transaldolase family. Type 1 subfamily. In terms of assembly, homodimer.

The protein resides in the cytoplasm. It carries out the reaction D-sedoheptulose 7-phosphate + D-glyceraldehyde 3-phosphate = D-erythrose 4-phosphate + beta-D-fructose 6-phosphate. The protein operates within carbohydrate degradation; pentose phosphate pathway; D-glyceraldehyde 3-phosphate and beta-D-fructose 6-phosphate from D-ribose 5-phosphate and D-xylulose 5-phosphate (non-oxidative stage): step 2/3. Its function is as follows. Transaldolase is important for the balance of metabolites in the pentose-phosphate pathway. The chain is Transaldolase from Shewanella frigidimarina (strain NCIMB 400).